The primary structure comprises 277 residues: Inositol monophosphatase 1 (277 aa).

Positions 70, 90, 92, and 93 each coordinate Mg(2+). Glu70 contributes to the substrate binding site. Residue 92-95 coordinates substrate; the sequence is IDGT. Position 168 is a phosphothreonine (Thr168). Substrate is bound by residues 194–196, Glu213, and Asp220; that span reads GTA. Residue Asp220 participates in Mg(2+) binding.

This sequence belongs to the inositol monophosphatase superfamily. Homodimer. It depends on Mg(2+) as a cofactor.

It is found in the cytoplasm. It catalyses the reaction a myo-inositol phosphate + H2O = myo-inositol + phosphate. It carries out the reaction 1D-myo-inositol 1-phosphate + H2O = myo-inositol + phosphate. The enzyme catalyses 1D-myo-inositol 2-phosphate + H2O = myo-inositol + phosphate. The catalysed reaction is 1D-myo-inositol 3-phosphate + H2O = myo-inositol + phosphate. It catalyses the reaction 1D-myo-inositol 4-phosphate + H2O = myo-inositol + phosphate. It carries out the reaction 1D-myo-inositol 5-phosphate + H2O = myo-inositol + phosphate. The enzyme catalyses 1D-myo-inositol 6-phosphate + H2O = myo-inositol + phosphate. The catalysed reaction is scyllo-inositol 1-phosphate + H2O = scyllo-inositol + phosphate. It catalyses the reaction alpha-D-galactose 1-phosphate + H2O = D-galactose + phosphate. It carries out the reaction alpha-D-glucose 1-phosphate + H2O = D-glucose + phosphate. The enzyme catalyses D-glucose 6-phosphate + H2O = D-glucose + phosphate. The catalysed reaction is beta-D-fructose 1-phosphate + H2O = D-fructose + phosphate. It catalyses the reaction glycerol 2-phosphate + H2O = glycerol + phosphate. It carries out the reaction adenosine 2'-phosphate + H2O = adenosine + phosphate. The protein operates within polyol metabolism; myo-inositol biosynthesis; myo-inositol from D-glucose 6-phosphate: step 2/2. Its activity is regulated as follows. Inhibited by Li(+), Ca(2+) and Mn(2+), but also by Mg(2+) at concentrations above 3 mM. Functionally, phosphatase involved in the dephosphorylation of myo-inositol monophosphate to generate myo-inositol. Is also able to dephosphorylate scyllo-inositol-phosphate, myo-inositol 1,4-diphosphate, scyllo-inositol-1,3-diphosphate and scyllo-inositol-1,4-diphosphate. Also dephosphorylates in vitro other sugar-phosphates including D-galactose-1-phosphate, glucose-1-phosphate, glucose-6-phosphate, fructose-1-phosphate, beta-glycerophosphate and 2'-AMP. Responsible for the provision of inositol required for synthesis of phosphatidylinositol and polyphosphoinositides, and involved in maintaining normal brain function. Has been implicated as the pharmacological target for lithium Li(+) action in brain. The sequence is that of Inositol monophosphatase 1 (IMPA1) from Sus scrofa (Pig).